The sequence spans 81 residues: Beta-catenin-interacting protein 1 (81 aa).

Ser-59 carries the post-translational modification Phosphoserine.

Belongs to the CTNNBIP1 family. As to quaternary structure, binds CTNNB1.

It localises to the cytoplasm. The protein resides in the nucleus. Prevents the interaction between CTNNB1 and TCF family members, and acts as a negative regulator of the Wnt signaling pathway. The protein is Beta-catenin-interacting protein 1 (CTNNBIP1) of Homo sapiens (Human).